We begin with the raw amino-acid sequence, 681 residues long: Methionine--tRNA ligase (681 aa).

Positions P14–H24 match the 'HIGH' region motif. The Zn(2+) site is built by C145, C148, C158, and C161. A 'KMSKS' region motif is present at residues K331–S335. K334 provides a ligand contact to ATP. In terms of domain architecture, tRNA-binding spans T579–K681.

The protein belongs to the class-I aminoacyl-tRNA synthetase family. MetG type 1 subfamily. In terms of assembly, homodimer. Zn(2+) serves as cofactor.

The protein resides in the cytoplasm. The catalysed reaction is tRNA(Met) + L-methionine + ATP = L-methionyl-tRNA(Met) + AMP + diphosphate. In terms of biological role, is required not only for elongation of protein synthesis but also for the initiation of all mRNA translation through initiator tRNA(fMet) aminoacylation. The protein is Methionine--tRNA ligase of Pseudomonas putida (strain W619).